Reading from the N-terminus, the 201-residue chain is Recombination protein RecR (201 aa).

The C4-type zinc-finger motif lies at 57-72 (CADCRTFTEQDICTIC). In terms of domain architecture, Toprim spans 81 to 176 (GQICVVESPA…VASRIAHGVP (96 aa)).

Belongs to the RecR family.

Its function is as follows. May play a role in DNA repair. It seems to be involved in an RecBC-independent recombinational process of DNA repair. It may act with RecF and RecO. This chain is Recombination protein RecR, found in Serratia proteamaculans (strain 568).